We begin with the raw amino-acid sequence, 291 residues long: tRNA dimethylallyltransferase (291 aa).

Gly17 to Ser24 lines the ATP pocket. Thr19–Ser24 is a binding site for substrate.

Belongs to the IPP transferase family. Monomer. Mg(2+) is required as a cofactor.

It carries out the reaction adenosine(37) in tRNA + dimethylallyl diphosphate = N(6)-dimethylallyladenosine(37) in tRNA + diphosphate. Catalyzes the transfer of a dimethylallyl group onto the adenine at position 37 in tRNAs that read codons beginning with uridine, leading to the formation of N6-(dimethylallyl)adenosine (i(6)A). This Cereibacter sphaeroides (strain ATCC 17025 / ATH 2.4.3) (Rhodobacter sphaeroides) protein is tRNA dimethylallyltransferase.